A 979-amino-acid chain; its full sequence is Protein SMAX1-LIKE 6 (979 aa).

The region spanning 8–190 is the Clp R domain; sequence ARECLTEEAA…PVTQLSSRFS (183 aa). 2 repeat regions span residues 12-86 and 100-190; these read LTEE…LDRL and VSNS…SRFS. Residues 833–837 carry the EAR motif; the sequence is LDLNL.

This sequence belongs to the ClpA/ClpB family. As to quaternary structure, interacts with TPL/TPR in an EAR-motif dependent manner. Interacts with TPR3. Interacts with MAX2 and TPR2. Interacts with D14. The interaction with D14 occurs in the presence of (2'R) stereoisomers of strigolactones, but not (2'S) stereoisomers. In terms of processing, ubiquitinated upon strigolactone treatment. Probable proteolytic target of SCF(MAX2)-mediated stigolactone signaling. In terms of tissue distribution, detected in roots, seedlings and axillary branches. Expressed in the primary rosette buds and expanding leaves of adult rosettes, the vasculature of the hypocotyls, cotyledons, and mature roots, and in the midvein and petioles of young leaves.

It is found in the nucleus. Its function is as follows. Probable component of a transcriptional corepressor complex involved in branching control. Regulates cotyledon expansion and lateral root growth, but not germination or hypocotyl elongation. Promotes auxin transport and PIN1 accumulation in the stem and represses BRC1/TCP18 expression in axillary buds. This chain is Protein SMAX1-LIKE 6, found in Arabidopsis thaliana (Mouse-ear cress).